The primary structure comprises 324 residues: Glyoxylate/hydroxypyruvate reductase B (324 aa).

Active-site residues include Arg-237 and Glu-266. The active-site Proton donor is the His-285.

The protein belongs to the D-isomer specific 2-hydroxyacid dehydrogenase family. GhrB subfamily. In terms of assembly, homodimer.

Its subcellular location is the cytoplasm. It catalyses the reaction glycolate + NADP(+) = glyoxylate + NADPH + H(+). It carries out the reaction (R)-glycerate + NAD(+) = 3-hydroxypyruvate + NADH + H(+). The catalysed reaction is (R)-glycerate + NADP(+) = 3-hydroxypyruvate + NADPH + H(+). Catalyzes the NADPH-dependent reduction of glyoxylate and hydroxypyruvate into glycolate and glycerate, respectively. In Escherichia coli O6:H1 (strain CFT073 / ATCC 700928 / UPEC), this protein is Glyoxylate/hydroxypyruvate reductase B.